Reading from the N-terminus, the 114-residue chain is Progonadoliberin-2 (114 aa).

Positions 1 to 25 (MASSMLGFLLLLLLLMAAHPGPSEA) are cleaved as a signal peptide. Residues 22–80 (PSEAQHWSHGWYPGGKRASNSPQDPQSALRPPAPSAAQTAHSFRSAALASPEDSVPWEG) are disordered. Glycine amide is present on Gly-35.

It belongs to the GnRH family. As to expression, midbrain.

It is found in the secreted. Its function is as follows. Stimulates the secretion of gonadotropins; it stimulates the secretion of both luteinizing and follicle-stimulating hormones. The chain is Progonadoliberin-2 (GNRH2) from Tupaia belangeri (Common tree shrew).